We begin with the raw amino-acid sequence, 295 residues long: Phosphoribosylaminoimidazole-succinocarboxamide synthase (295 aa).

Belongs to the SAICAR synthetase family.

The enzyme catalyses 5-amino-1-(5-phospho-D-ribosyl)imidazole-4-carboxylate + L-aspartate + ATP = (2S)-2-[5-amino-1-(5-phospho-beta-D-ribosyl)imidazole-4-carboxamido]succinate + ADP + phosphate + 2 H(+). It participates in purine metabolism; IMP biosynthesis via de novo pathway; 5-amino-1-(5-phospho-D-ribosyl)imidazole-4-carboxamide from 5-amino-1-(5-phospho-D-ribosyl)imidazole-4-carboxylate: step 1/2. This is Phosphoribosylaminoimidazole-succinocarboxamide synthase from Halorhodospira halophila (strain DSM 244 / SL1) (Ectothiorhodospira halophila (strain DSM 244 / SL1)).